Reading from the N-terminus, the 102-residue chain is MAKGQSLQDPFVNALRRERVPVSIYLVNGIKLQGQIESFDQFVILLKNTVSQMVYKHAISTVVPSRPVSHHSNNAGGGASNNYHHGSNAQGSTAQQDSEETE.

The Sm domain maps to 9 to 68; that stretch reads DPFVNALRRERVPVSIYLVNGIKLQGQIESFDQFVILLKNTVSQMVYKHAISTVVPSRPV. A disordered region spans residues 63–102; it reads VPSRPVSHHSNNAGGGASNNYHHGSNAQGSTAQQDSEETE. Positions 70 to 88 are enriched in low complexity; the sequence is HHSNNAGGGASNNYHHGSN.

The protein belongs to the Hfq family. Homohexamer.

In terms of biological role, RNA chaperone that binds small regulatory RNA (sRNAs) and mRNAs to facilitate mRNA translational regulation in response to envelope stress, environmental stress and changes in metabolite concentrations. Also binds with high specificity to tRNAs. The chain is RNA-binding protein Hfq from Salmonella heidelberg (strain SL476).